Consider the following 1837-residue polypeptide: AF4/FMR2 family member lilli (1837 aa).

Disordered regions lie at residues 1 to 25 (MAQQ…QQQQ), 65 to 109 (NLYS…PRRL), 162 to 295 (IQQQ…LHNG), 455 to 592 (QQLP…KKKY), 605 to 712 (TGLL…PGNV), 797 to 852 (PKSQ…LQIP), 868 to 1250 (NNMQ…GGAK), 1267 to 1311 (QQQQ…GLAS), and 1344 to 1466 (APSS…DPML). Residues 16–25 (HQQQQQQQQQ) are compositionally biased toward low complexity. Positions 84–109 (REKYERQQGIQSDDRETSLFSEPRRL) are enriched in basic and acidic residues. 3 stretches are compositionally biased toward low complexity: residues 162–179 (IQQQ…VASS), 187–200 (QTQQ…QQQQ), and 247–264 (NSNS…SSSS). Phosphothreonine is present on T468. Positions 475–488 (LKIEKNPILEKQDS) are enriched in basic and acidic residues. The segment covering 490–500 (LENDLELSESE) has biased composition (acidic residues). Phosphoserine is present on residues S497 and S499. Low complexity-rich tracts occupy residues 509–529 (SPGS…SESS) and 542–552 (QQQQQTQQQQL). The span at 553–563 (HGHHPQSHHHQ) shows a compositional bias: basic residues. Over residues 564–583 (QFLQQQLQRQQQQQQQQQQL) the composition is skewed to low complexity. Composition is skewed to gly residues over residues 612-633 (GGLG…GNGG) and 641-673 (GSMG…GIGS). 2 stretches are compositionally biased toward polar residues: residues 678 to 690 (NKTP…NKWN) and 698 to 711 (PTSQ…SPGN). Residues 815-837 (SESATSGSSSSSCSSSDSAASAS) are compositionally biased toward low complexity. The span at 868–880 (NNMQKSQSMSVTV) shows a compositional bias: polar residues. A compositionally biased stretch (basic residues) spans 892–902 (PRQKKPRKKKM). A phosphoserine mark is found at S913 and S914. Low complexity-rich tracts occupy residues 927-951 (VVAQ…ATTT) and 961-1013 (QQQQ…SSVL). Positions 952 to 964 (KKGRGRPRKQQQQ) form a DNA-binding region, a.T hook. Phosphoserine is present on residues S974 and S976. A compositionally biased stretch (polar residues) spans 1021-1033 (SQSSSNGNTPTKK). Low complexity-rich tracts occupy residues 1034–1049 (MSSI…SAAA), 1056–1091 (AVAA…SSSS), 1130–1139 (GSSSPTSSSS), and 1157–1173 (ISNS…VNNN). Over residues 1174 to 1184 (LQQQAMPQQSP) the composition is skewed to polar residues. The span at 1189–1212 (LSGGSQQLSSSDSSSSSSGSSSSS) shows a compositional bias: low complexity. Positions 1217–1234 (DAKREKNRERKPKSDKNK) are enriched in basic and acidic residues. Low complexity predominate over residues 1267–1276 (QQQQQQQQVQ). Residues 1345–1355 (PSSSNQQNGHL) are compositionally biased toward polar residues. Residues 1373-1386 (KVKHEHHQLHHHSQ) show a composition bias toward basic residues. Basic and acidic residues-rich tracts occupy residues 1393–1407 (VKPE…ETKF) and 1416–1432 (FQLK…ERDQ). A Phosphoserine modification is found at S1517. Polar residues predominate over residues 1550 to 1560 (AVQTTPPTSVT). Disordered regions lie at residues 1550 to 1571 (AVQT…LVSQ) and 1727 to 1756 (GNTP…IVPQ). Over residues 1727 to 1747 (GNTPSSISPSNSVGSQGSGSN) the composition is skewed to low complexity.

It belongs to the AF4 family.

The protein localises to the nucleus. Has a role in transcriptional regulation. Acts in parallel with the Ras/MAPK and the PI3K/PKB pathways in the control of cell identity and cellular growth. Essential for regulation of the cytoskeleton and cell growth but not for cell proliferation or growth rate. Required specifically for the microtubule-based basal transport of lipid droplets. Plays a partially redundant function downstream of Raf in cell fate specification in the developing eye. Pair-rule protein that regulates embryonic cellularization, gastrulation and segmentation. This Drosophila willistoni (Fruit fly) protein is AF4/FMR2 family member lilli.